We begin with the raw amino-acid sequence, 118 residues long: UPF0344 protein RBAM_010920 (118 aa).

The next 4 helical transmembrane spans lie at 4-24 (WHITSWVVALILVFVSYGLYG), 33-53 (ITHMILRLFYIIIILTGAELF), 62-82 (EYAGKMLLGIITIGLMEMLVI), and 93-113 (LWIGFIIVLVLTVLLGLHLPI).

This sequence belongs to the UPF0344 family.

It is found in the cell membrane. This is UPF0344 protein RBAM_010920 from Bacillus velezensis (strain DSM 23117 / BGSC 10A6 / LMG 26770 / FZB42) (Bacillus amyloliquefaciens subsp. plantarum).